Consider the following 1040-residue polypeptide: Contactin-2 (1040 aa).

Residues 1-30 (MGTATRRKPHLLLVAAVALVSSSAWSSALG) form the signal peptide. Ig-like C2-type domains lie at 43–128 (PLSV…AILR), 133–222 (QEFS…SVFS), 239–322 (PSIK…GRII), 327–411 (PEWL…AELA), 417–504 (PDFR…GILS), and 509–603 (TKIT…ATVL). 4 disulfides stabilise this stretch: C61/C111, C155/C207, C261/C306, and C348/C395. Residues N76, N198, and N204 are each glycosylated (N-linked (GlcNAc...) asparagine). 4 N-linked (GlcNAc...) asparagine glycosylation sites follow: N461, N477, N498, and N525. Fibronectin type-III domains are found at residues 610-708 (PPGG…TREA), 713-810 (APSG…SAEE), 815-910 (APTK…TMKP), and 915-1006 (PPGN…NGGT). Residues 694–720 (GEPSGPSSKIRTREAAPSVAPSGLSGG) are disordered. The short motif at 794-796 (RGD) is the Cell attachment site element. Residues N830, N904, N918, and N940 are each glycosylated (N-linked (GlcNAc...) asparagine). Positions 894-919 (AGTGPASPSANATTMKPPPRRPPGNI) are disordered. Residue N1012 is the site of GPI-anchor amidated asparagine attachment. The propeptide at 1013–1040 (MAVRPAPHPGTVISHSVAMLILIGSLEL) is removed in mature form.

This sequence belongs to the immunoglobulin superfamily. Contactin family.

Its subcellular location is the cell membrane. Its function is as follows. In conjunction with another transmembrane protein, CNTNAP2, contributes to the organization of axonal domains at nodes of Ranvier by maintaining voltage-gated potassium channels at the juxtaparanodal region. May be involved in cell adhesion. The protein is Contactin-2 (CNTN2) of Homo sapiens (Human).